Here is a 499-residue protein sequence, read N- to C-terminus: Probable cytosol aminopeptidase (499 aa).

The Mn(2+) site is built by K262 and D267. K274 is an active-site residue. D285, D344, and E346 together coordinate Mn(2+). Residue R348 is part of the active site.

This sequence belongs to the peptidase M17 family. It depends on Mn(2+) as a cofactor.

Its subcellular location is the cytoplasm. It carries out the reaction Release of an N-terminal amino acid, Xaa-|-Yaa-, in which Xaa is preferably Leu, but may be other amino acids including Pro although not Arg or Lys, and Yaa may be Pro. Amino acid amides and methyl esters are also readily hydrolyzed, but rates on arylamides are exceedingly low.. The catalysed reaction is Release of an N-terminal amino acid, preferentially leucine, but not glutamic or aspartic acids.. Its function is as follows. Presumably involved in the processing and regular turnover of intracellular proteins. Catalyzes the removal of unsubstituted N-terminal amino acids from various peptides. The polypeptide is Probable cytosol aminopeptidase (Protochlamydia amoebophila (strain UWE25)).